We begin with the raw amino-acid sequence, 329 residues long: Chlorophyllase-1, chloroplastic (329 aa).

A chloroplast-targeting transit peptide spans 1–21; that stretch reads MAAMVDSKPAASVQGTPLLAT. The GXSXG motif lies at 145 to 149; sequence GHSRG. The active-site Nucleophile is Ser147. Catalysis depends on charge relay system residues Asp169 and His242.

Belongs to the AB hydrolase superfamily. Lipase family.

The protein resides in the plastid. Its subcellular location is the chloroplast. It catalyses the reaction a chlorophyll + H2O = a chlorophyllide + phytol + H(+). It functions in the pathway porphyrin-containing compound metabolism; chlorophyll degradation. Functionally, catalyzes the hydrolysis of ester bond in chlorophyll to yield chlorophyllide and phytol. The protein is Chlorophyllase-1, chloroplastic of Citrus unshiu (Satsuma mandarin).